Consider the following 430-residue polypeptide: Adenylosuccinate synthetase (430 aa).

Residues 12–18 and 40–42 contribute to the GTP site; these read GDEGKGK and GHT. The active-site Proton acceptor is D13. Positions 13 and 40 each coordinate Mg(2+). Residues 13 to 16, 38 to 41, T130, R144, Q224, T239, and R303 each bind IMP; these read DEGK and NAGH. H41 acts as the Proton donor in catalysis. 299–305 serves as a coordination point for substrate; the sequence is TVTGRKR. GTP-binding positions include R305, 331-333, and 413-415; these read KLD and STS.

This sequence belongs to the adenylosuccinate synthetase family. Homodimer. Requires Mg(2+) as cofactor.

The protein resides in the cytoplasm. The catalysed reaction is IMP + L-aspartate + GTP = N(6)-(1,2-dicarboxyethyl)-AMP + GDP + phosphate + 2 H(+). The protein operates within purine metabolism; AMP biosynthesis via de novo pathway; AMP from IMP: step 1/2. In terms of biological role, plays an important role in the de novo pathway of purine nucleotide biosynthesis. Catalyzes the first committed step in the biosynthesis of AMP from IMP. The sequence is that of Adenylosuccinate synthetase from Parvibaculum lavamentivorans (strain DS-1 / DSM 13023 / NCIMB 13966).